A 987-amino-acid chain; its full sequence is Mitotic checkpoint serine/threonine-protein kinase bub-1 (987 aa).

2 disordered regions span residues 278-385 (RRRH…TSKS) and 574-599 (LAANQAVQPSVTESSKPERSDPKDSS). Over residues 350-364 (ERLKIMTAGRKDGNP) the composition is skewed to basic and acidic residues. Residues 368-380 (STSISSNYSTASA) show a composition bias toward low complexity. Over residues 575–587 (AANQAVQPSVTES) the composition is skewed to polar residues. Basic and acidic residues predominate over residues 588–599 (SKPERSDPKDSS). A Protein kinase domain is found at 690-987 (LHIQTLIGQG…EACDLAANQK (298 aa)). Residues 696 to 704 (IGQGGYAKV) and Lys-718 each bind ATP. Asp-814 serves as the catalytic Proton acceptor.

This sequence belongs to the protein kinase superfamily. Ser/Thr protein kinase family. BUB1 subfamily. In terms of assembly, interacts (via kinase domain) with mdf-1 (via coiled coil domain); the interaction recruits mdf-1 to unattached kinetochores during mitosis and between homologous chromosomes in early anaphase of meiosis I. May interact with bub-3; for localization at the kinetochore and the onset of anaphase.

The protein localises to the cytoplasm. It is found in the cell cortex. The protein resides in the nucleus. It localises to the chromosome. Its subcellular location is the centromere. The protein localises to the kinetochore. It carries out the reaction L-seryl-[protein] + ATP = O-phospho-L-seryl-[protein] + ADP + H(+). The catalysed reaction is L-threonyl-[protein] + ATP = O-phospho-L-threonyl-[protein] + ADP + H(+). Serine/threonine-protein kinase essential for spindle-assembly checkpoint signaling. Plays a key role in the recruitment of the checkpoint proteins bub-3, mdf-1 and mdf-2 to unattached kinetochores. mdf-1 recruitment is independent of bub-1 kinase activity. Has a role in the correct kinetochore localization of the spindly-like protein spdl-1. In addition, during meiotic anaphase I, controls the recruitment of hcp-1/2 and klp-19 to the ring-shaped domain formed between chromosomes. Involved in chromosome alignment, chromosome homolog segregation and spindle assembly. In association with bub-3 at the kinetochore region of chromosomes, promotes the onset on anaphase independently from spindle checkpoint signaling and promotes the formation of stable end-on bipolar attachments of chromosomes. Plays a role in nuclear envelope breakdown. Required maternally during embryogenesis and in the zygote for the postembryonic development of several tissues including ventral cord neurons, gonad, intestine and seam cells. The sequence is that of Mitotic checkpoint serine/threonine-protein kinase bub-1 from Caenorhabditis elegans.